Consider the following 319-residue polypeptide: MELIKEETAPEDDSRGRQRDCRTSVVSSKQVQRNQLEICPGLVSGDVHPMCRDRSDPEPRTGDAASDDGFPADKTSSKRDSECAAVNTDGVSDGRQGKKKHRRRPSKKKRRWKPYFKLTWEEKKELDERETARASRVRAEMFAKGLPVAPYNTTQFLMEEHDREEPDLNTELGGRKSGAIRSEDTASEDENFEAEEDDEEEGGGGSDGMGRPGQAGGEFLQKDFSETYEKYHVEALQNMSKQELVREYLELEKCMSRLEEENNWLRHVRRNPESPADGTGSQRVRELEVEVEKLRAENNELLLKTPASNEPGLNQSQPS.

Residues 1–22 (MELIKEETAPEDDSRGRQRDCR) show a composition bias toward basic and acidic residues. Disordered regions lie at residues 1-111 (MELI…KKRR), 157-223 (LMEE…LQKD), 262-286 (NNWLRHVRRNPESPADGTGSQRVRE), and 299-319 (NELLLKTPASNEPGLNQSQPS). The segment covering 24–35 (SVVSSKQVQRNQ) has biased composition (polar residues). The span at 49-61 (PMCRDRSDPEPRT) shows a compositional bias: basic and acidic residues. Residues 97 to 111 (GKKKHRRRPSKKKRR) are compositionally biased toward basic residues. Residues 185–202 (TASEDENFEAEEDDEEEG) show a composition bias toward acidic residues. Over residues 203-216 (GGGSDGMGRPGQAG) the composition is skewed to gly residues. Residues 240-306 (SKQELVREYL…ENNELLLKTP (67 aa)) are a coiled coil. Over residues 306–319 (PASNEPGLNQSQPS) the composition is skewed to polar residues.

This sequence belongs to the HEXIM family. In terms of assembly, homooligomer and heterooligomer. Core component of the 7SK RNP complex.

The protein localises to the nucleus. Its subcellular location is the cytoplasm. Functionally, transcriptional regulator which functions as a general RNA polymerase II transcription inhibitor. Core component of the 7SK RNP complex: in cooperation with 7SK snRNA sequesters P-TEFb in a large inactive 7SK snRNP complex preventing RNA polymerase II phosphorylation and subsequent transcriptional elongation. Plays a role in the regulation of DNA virus-mediated innate immune response by assembling into the HDP-RNP complex, a complex that serves as a platform for IRF3 phosphorylation and subsequent innate immune response activation through the cGAS-STING pathway. The protein is Protein HEXIM1 (hexim1) of Danio rerio (Zebrafish).